Consider the following 246-residue polypeptide: Exosome complex component Rrp41 (246 aa).

The protein belongs to the RNase PH family. Rrp41 subfamily. Component of the archaeal exosome complex. Forms a hexameric ring-like arrangement composed of 3 Rrp41-Rrp42 heterodimers. The hexameric ring associates with a trimer of Rrp4 and/or Csl4 subunits.

It localises to the cytoplasm. Its function is as follows. Catalytic component of the exosome, which is a complex involved in RNA degradation. Has 3'-&gt;5' exoribonuclease activity. Can also synthesize heteromeric RNA-tails. This Aeropyrum pernix (strain ATCC 700893 / DSM 11879 / JCM 9820 / NBRC 100138 / K1) protein is Exosome complex component Rrp41.